A 410-amino-acid polypeptide reads, in one-letter code: Chorismate synthase (410 aa).

Residues arginine 40 and arginine 46 each coordinate NADP(+). FMN-binding positions include 129 to 131 (RSS), 257 to 258 (QA), glycine 302, 317 to 321 (KPISS), and arginine 343.

Belongs to the chorismate synthase family. Homotetramer. Requires FMNH2 as cofactor.

It carries out the reaction 5-O-(1-carboxyvinyl)-3-phosphoshikimate = chorismate + phosphate. Its pathway is metabolic intermediate biosynthesis; chorismate biosynthesis; chorismate from D-erythrose 4-phosphate and phosphoenolpyruvate: step 7/7. Catalyzes the anti-1,4-elimination of the C-3 phosphate and the C-6 proR hydrogen from 5-enolpyruvylshikimate-3-phosphate (EPSP) to yield chorismate, which is the branch point compound that serves as the starting substrate for the three terminal pathways of aromatic amino acid biosynthesis. This reaction introduces a second double bond into the aromatic ring system. This is Chorismate synthase from Chlorobaculum parvum (strain DSM 263 / NCIMB 8327) (Chlorobium vibrioforme subsp. thiosulfatophilum).